The chain runs to 304 residues: tRNA dimethylallyltransferase (304 aa).

2–9 serves as a coordination point for ATP; the sequence is GPTASGKT. 4-9 lines the substrate pocket; it reads TASGKT. Interaction with substrate tRNA stretches follow at residues 27–30, 151–155, 232–237, and 265–272; these read DSAL, QRINR, RCVGYR, and KRQITWLR.

Belongs to the IPP transferase family. Monomer. Requires Mg(2+) as cofactor.

The catalysed reaction is adenosine(37) in tRNA + dimethylallyl diphosphate = N(6)-dimethylallyladenosine(37) in tRNA + diphosphate. Catalyzes the transfer of a dimethylallyl group onto the adenine at position 37 in tRNAs that read codons beginning with uridine, leading to the formation of N6-(dimethylallyl)adenosine (i(6)A). In Actinobacillus pleuropneumoniae serotype 5b (strain L20), this protein is tRNA dimethylallyltransferase.